The sequence spans 82 residues: Putative defensin-like protein 48 (82 aa).

Residues 1–28 form the signal peptide; that stretch reads MGIKTLIIFFHIFILAVLSSNNIILTSG. Cystine bridges form between C39–C80, C43–C67, C53–C78, and C57–C79.

The protein belongs to the DEFL family.

The protein localises to the secreted. The polypeptide is Putative defensin-like protein 48 (Arabidopsis thaliana (Mouse-ear cress)).